The sequence spans 131 residues: Large ribosomal subunit protein bL17 (131 aa).

It belongs to the bacterial ribosomal protein bL17 family. As to quaternary structure, part of the 50S ribosomal subunit. Contacts protein L32.

This chain is Large ribosomal subunit protein bL17, found in Shewanella sp. (strain ANA-3).